A 315-amino-acid polypeptide reads, in one-letter code: Probable inactive acetaldehyde dehydrogenase 1 (315 aa).

NAD(+)-binding positions include 14 to 17 (SGDV) and Asn-288.

This sequence belongs to the acetaldehyde dehydrogenase family.

The chain is Probable inactive acetaldehyde dehydrogenase 1 from Mycolicibacterium vanbaalenii (strain DSM 7251 / JCM 13017 / BCRC 16820 / KCTC 9966 / NRRL B-24157 / PYR-1) (Mycobacterium vanbaalenii).